A 256-amino-acid chain; its full sequence is Thiazole synthase (256 aa).

Catalysis depends on lysine 95, which acts as the Schiff-base intermediate with DXP. 1-deoxy-D-xylulose 5-phosphate-binding positions include glycine 156, 182–183 (AG), and 204–205 (NT).

The protein belongs to the ThiG family. In terms of assembly, homotetramer. Forms heterodimers with either ThiH or ThiS.

The protein localises to the cytoplasm. It catalyses the reaction [ThiS sulfur-carrier protein]-C-terminal-Gly-aminoethanethioate + 2-iminoacetate + 1-deoxy-D-xylulose 5-phosphate = [ThiS sulfur-carrier protein]-C-terminal Gly-Gly + 2-[(2R,5Z)-2-carboxy-4-methylthiazol-5(2H)-ylidene]ethyl phosphate + 2 H2O + H(+). It participates in cofactor biosynthesis; thiamine diphosphate biosynthesis. Functionally, catalyzes the rearrangement of 1-deoxy-D-xylulose 5-phosphate (DXP) to produce the thiazole phosphate moiety of thiamine. Sulfur is provided by the thiocarboxylate moiety of the carrier protein ThiS. In vitro, sulfur can be provided by H(2)S. This chain is Thiazole synthase, found in Escherichia coli (strain K12 / MC4100 / BW2952).